The chain runs to 238 residues: Serine protease SplE (238 aa).

An N-terminal signal peptide occupies residues 1-36 (MNKNIIIKSIAALTILTSVTGVGTTMVEGIQQTAKA). Residues His75, Asp113, and Ser191 each act as charge relay system in the active site.

The protein belongs to the peptidase S1B family.

The protein resides in the secreted. The polypeptide is Serine protease SplE (splE) (Staphylococcus aureus).